A 313-amino-acid chain; its full sequence is Cytochrome c biogenesis protein CcsA (313 aa).

The next 8 membrane-spanning stretches (helical) occupy residues 13 to 35 (ISFS…EIAG), 43 to 63 (GMIA…IYSG), 67 to 87 (LSNL…IHMI), 96 to 116 (FLSS…TSGL), 142 to 162 (MLLS…LLVI), 219 to 239 (VIGI…VWAN), 252 to 269 (ETWA…LHTR), and 280 to 300 (AIVA…VNLL).

This sequence belongs to the CcmF/CycK/Ccl1/NrfE/CcsA family. In terms of assembly, may interact with Ccs1.

It is found in the plastid. Its subcellular location is the chloroplast thylakoid membrane. Its function is as follows. Required during biogenesis of c-type cytochromes (cytochrome c6 and cytochrome f) at the step of heme attachment. The chain is Cytochrome c biogenesis protein CcsA from Amborella trichopoda.